A 172-amino-acid chain; its full sequence is NAD(P)H-quinone oxidoreductase subunit I, chloroplastic (172 aa).

4Fe-4S ferredoxin-type domains follow at residues 55-84 (GRIH…VDWK) and 95-124 (LNYS…MTEE). Residues Cys-64, Cys-67, Cys-70, Cys-74, Cys-104, Cys-107, Cys-110, and Cys-114 each contribute to the [4Fe-4S] cluster site.

It belongs to the complex I 23 kDa subunit family. In terms of assembly, NDH is composed of at least 16 different subunits, 5 of which are encoded in the nucleus. [4Fe-4S] cluster serves as cofactor.

The protein resides in the plastid. The protein localises to the chloroplast thylakoid membrane. It catalyses the reaction a plastoquinone + NADH + (n+1) H(+)(in) = a plastoquinol + NAD(+) + n H(+)(out). The enzyme catalyses a plastoquinone + NADPH + (n+1) H(+)(in) = a plastoquinol + NADP(+) + n H(+)(out). Its function is as follows. NDH shuttles electrons from NAD(P)H:plastoquinone, via FMN and iron-sulfur (Fe-S) centers, to quinones in the photosynthetic chain and possibly in a chloroplast respiratory chain. The immediate electron acceptor for the enzyme in this species is believed to be plastoquinone. Couples the redox reaction to proton translocation, and thus conserves the redox energy in a proton gradient. This chain is NAD(P)H-quinone oxidoreductase subunit I, chloroplastic, found in Crucihimalaya wallichii (Rock-cress).